Here is a 460-residue protein sequence, read N- to C-terminus: UDP-N-acetylmuramoylalanine--D-glutamate ligase (460 aa).

120–126 is an ATP binding site; it reads GSNGKTT.

The protein belongs to the MurCDEF family.

Its subcellular location is the cytoplasm. The enzyme catalyses UDP-N-acetyl-alpha-D-muramoyl-L-alanine + D-glutamate + ATP = UDP-N-acetyl-alpha-D-muramoyl-L-alanyl-D-glutamate + ADP + phosphate + H(+). It functions in the pathway cell wall biogenesis; peptidoglycan biosynthesis. Functionally, cell wall formation. Catalyzes the addition of glutamate to the nucleotide precursor UDP-N-acetylmuramoyl-L-alanine (UMA). This chain is UDP-N-acetylmuramoylalanine--D-glutamate ligase, found in Lactobacillus johnsonii (strain CNCM I-12250 / La1 / NCC 533).